Here is a 314-residue protein sequence, read N- to C-terminus: Methionyl-tRNA formyltransferase (314 aa).

Serine 113–proline 116 serves as a coordination point for (6S)-5,6,7,8-tetrahydrofolate.

Belongs to the Fmt family.

It catalyses the reaction L-methionyl-tRNA(fMet) + (6R)-10-formyltetrahydrofolate = N-formyl-L-methionyl-tRNA(fMet) + (6S)-5,6,7,8-tetrahydrofolate + H(+). Functionally, attaches a formyl group to the free amino group of methionyl-tRNA(fMet). The formyl group appears to play a dual role in the initiator identity of N-formylmethionyl-tRNA by promoting its recognition by IF2 and preventing the misappropriation of this tRNA by the elongation apparatus. In Pseudomonas syringae pv. syringae (strain B728a), this protein is Methionyl-tRNA formyltransferase.